The following is a 315-amino-acid chain: Neuroguidin (315 aa).

Disordered regions lie at residues 127 to 201 and 289 to 315; these read SEND…KQKR and VQDIGNPKPKKKKIIKKGKKKVFRKRK. Composition is skewed to basic and acidic residues over residues 159 to 168 and 182 to 200; these read KTKEQKEPSG and YDGDLTEADRQKERVEKQK. Positions 181–206 form a coiled coil; sequence HYDGDLTEADRQKERVEKQKRAALRS. Residues 296–315 show a composition bias toward basic residues; the sequence is KPKKKKIIKKGKKKVFRKRK.

It belongs to the SAS10 family. As to quaternary structure, part of the small subunit (SSU) processome, composed of more than 70 proteins and the RNA chaperone small nucleolar RNA (snoRNA) U3.

The protein resides in the nucleus. It is found in the nucleolus. The protein localises to the chromosome. It localises to the centromere. Its subcellular location is the cytoplasm. The protein resides in the cell projection. It is found in the axon. The protein localises to the dendrite. It localises to the filopodium. In terms of biological role, part of the small subunit (SSU) processome, first precursor of the small eukaryotic ribosomal subunit. During the assembly of the SSU processome in the nucleolus, many ribosome biogenesis factors, an RNA chaperone and ribosomal proteins associate with the nascent pre-rRNA and work in concert to generate RNA folding, modifications, rearrangements and cleavage as well as targeted degradation of pre-ribosomal RNA by the RNA exosome. Its dissociation from the complex determines the transition from state pre-A1 to state pre-A1*. May inhibit mRNA translation. The polypeptide is Neuroguidin (ngdn) (Danio rerio (Zebrafish)).